Reading from the N-terminus, the 458-residue chain is Bone morphogenetic protein 3 (458 aa).

An N-terminal signal peptide occupies residues methionine 1–glycine 23. Residues glutamate 24–lysine 348 constitute a propeptide that is removed on maturation. Asparagine 107 carries N-linked (GlcNAc...) asparagine glycosylation. 2 disordered regions span residues aspartate 244–serine 275 and glutamate 303–leucine 335. Over residues asparagine 320–arginine 329 the composition is skewed to basic residues. Cystine bridges form between cysteine 356–cysteine 423, cysteine 385–cysteine 455, and cysteine 389–cysteine 457. A glycan (N-linked (GlcNAc...) asparagine) is linked at asparagine 449.

It belongs to the TGF-beta family. As to quaternary structure, homodimer. Can form heterodimers with ADMP, BMP-2-I and/or BMP-2-II, and DERRIERE.

The protein resides in the secreted. Dorsalizing factor. Antagonizes mesoderm formation by ventralizing BMPs. The chain is Bone morphogenetic protein 3 (bmp3) from Xenopus laevis (African clawed frog).